Consider the following 63-residue polypeptide: Cytochrome c oxidase subunit 7C, mitochondrial (63 aa).

A mitochondrion-targeting transit peptide spans 1 to 16 (MLGQSIRRFTTSVVRR). The Mitochondrial matrix segment spans residues 17 to 33 (SHYEEGPGKNLPFSVEN). At Lys-25 the chain carries N6-acetyllysine; alternate. Lys-25 carries the post-translational modification N6-succinyllysine; alternate. The chain crosses the membrane as a helical span at residues 34-60 (KWSLLAKMCLYFGSAFATPFLVVRHQL). The Mitochondrial intermembrane portion of the chain corresponds to 61-63 (LKT).

This sequence belongs to the cytochrome c oxidase VIIc family. Component of the cytochrome c oxidase (complex IV, CIV), a multisubunit enzyme composed of 14 subunits. The complex is composed of a catalytic core of 3 subunits MT-CO1, MT-CO2 and MT-CO3, encoded in the mitochondrial DNA, and 11 supernumerary subunits COX4I1 (or COX4I2), COX5A, COX5B, COX6A1 (or COX6A2), COX6B1 (or COX6B2), COX6C, COX7A2 (or COX7A1), COX7B, COX7C, COX8A and NDUFA4, which are encoded in the nuclear genome. The complex exists as a monomer or a dimer and forms supercomplexes (SCs) in the inner mitochondrial membrane with NADH-ubiquinone oxidoreductase (complex I, CI) and ubiquinol-cytochrome c oxidoreductase (cytochrome b-c1 complex, complex III, CIII), resulting in different assemblies (supercomplex SCI(1)III(2)IV(1) and megacomplex MCI(2)III(2)IV(2)). Interacts with RAB5IF.

Its subcellular location is the mitochondrion inner membrane. It participates in energy metabolism; oxidative phosphorylation. In terms of biological role, component of the cytochrome c oxidase, the last enzyme in the mitochondrial electron transport chain which drives oxidative phosphorylation. The respiratory chain contains 3 multisubunit complexes succinate dehydrogenase (complex II, CII), ubiquinol-cytochrome c oxidoreductase (cytochrome b-c1 complex, complex III, CIII) and cytochrome c oxidase (complex IV, CIV), that cooperate to transfer electrons derived from NADH and succinate to molecular oxygen, creating an electrochemical gradient over the inner membrane that drives transmembrane transport and the ATP synthase. Cytochrome c oxidase is the component of the respiratory chain that catalyzes the reduction of oxygen to water. Electrons originating from reduced cytochrome c in the intermembrane space (IMS) are transferred via the dinuclear copper A center (CU(A)) of subunit 2 and heme A of subunit 1 to the active site in subunit 1, a binuclear center (BNC) formed by heme A3 and copper B (CU(B)). The BNC reduces molecular oxygen to 2 water molecules using 4 electrons from cytochrome c in the IMS and 4 protons from the mitochondrial matrix. The chain is Cytochrome c oxidase subunit 7C, mitochondrial (COX7C) from Homo sapiens (Human).